The sequence spans 525 residues: GMP synthase [glutamine-hydrolyzing] (525 aa).

One can recognise a Glutamine amidotransferase type-1 domain in the interval 9–207; it reads RILILDFGSQ…VRDICQCEAL (199 aa). Cys-86 serves as the catalytic Nucleophile. Catalysis depends on residues His-181 and Glu-183. The 193-residue stretch at 208 to 400 folds into the GMPS ATP-PPase domain; sequence WTPAKIIDDA…LGLPYDMLYR (193 aa). ATP is bound at residue 235-241; that stretch reads SGGVDSS.

As to quaternary structure, homodimer.

The catalysed reaction is XMP + L-glutamine + ATP + H2O = GMP + L-glutamate + AMP + diphosphate + 2 H(+). It participates in purine metabolism; GMP biosynthesis; GMP from XMP (L-Gln route): step 1/1. Its function is as follows. Catalyzes the synthesis of GMP from XMP. In Salmonella schwarzengrund (strain CVM19633), this protein is GMP synthase [glutamine-hydrolyzing].